The following is a 174-amino-acid chain: Endoribonuclease YbeY (174 aa).

Residues His124, His128, and His134 each coordinate Zn(2+).

The protein belongs to the endoribonuclease YbeY family. The cofactor is Zn(2+).

The protein resides in the cytoplasm. Single strand-specific metallo-endoribonuclease involved in late-stage 70S ribosome quality control and in maturation of the 3' terminus of the 16S rRNA. The sequence is that of Endoribonuclease YbeY from Synechococcus elongatus (strain ATCC 33912 / PCC 7942 / FACHB-805) (Anacystis nidulans R2).